The sequence spans 347 residues: Quinolinate synthase (347 aa).

The iminosuccinate site is built by His-47 and Ser-68. Cys-113 is a binding site for [4Fe-4S] cluster. Residues 139–141 (YAN) and Ser-156 each bind iminosuccinate. Cys-200 is a binding site for [4Fe-4S] cluster. Iminosuccinate contacts are provided by residues 226–228 (HPE) and Thr-243. Position 297 (Cys-297) interacts with [4Fe-4S] cluster.

The protein belongs to the quinolinate synthase family. Type 1 subfamily. [4Fe-4S] cluster serves as cofactor.

The protein localises to the cytoplasm. The catalysed reaction is iminosuccinate + dihydroxyacetone phosphate = quinolinate + phosphate + 2 H2O + H(+). The protein operates within cofactor biosynthesis; NAD(+) biosynthesis; quinolinate from iminoaspartate: step 1/1. In terms of biological role, catalyzes the condensation of iminoaspartate with dihydroxyacetone phosphate to form quinolinate. The sequence is that of Quinolinate synthase from Salmonella agona (strain SL483).